We begin with the raw amino-acid sequence, 102 residues long: Small ribosomal subunit protein uS10 (102 aa).

The protein belongs to the universal ribosomal protein uS10 family. Part of the 30S ribosomal subunit.

Functionally, involved in the binding of tRNA to the ribosomes. In Clostridium beijerinckii (strain ATCC 51743 / NCIMB 8052) (Clostridium acetobutylicum), this protein is Small ribosomal subunit protein uS10.